The sequence spans 167 residues: uncharacterized protein (167 aa).

A helical transmembrane segment spans residues 5–27; it reads LILLTFVSFVFSKTFYYDVYVFF.

Its subcellular location is the membrane. This is an uncharacterized protein from Aquifex aeolicus (strain VF5).